A 411-amino-acid polypeptide reads, in one-letter code: Na(+)-translocating NADH-quinone reductase subunit F (411 aa).

A helical membrane pass occupies residues 5-25; the sequence is VILALGIAAFTVIVLVLVAII. Residues 36–130 form the 2Fe-2S ferredoxin-type domain; it reads GDITIGINDD…NMEVELPEEI (95 aa). The [2Fe-2S] cluster site is built by Cys73, Cys79, Cys82, and Cys114. An FAD-binding FR-type domain is found at 133–273; the sequence is VKKWECTVIS…SGPFGEFFAK (141 aa).

Belongs to the NqrF family. Composed of six subunits; NqrA, NqrB, NqrC, NqrD, NqrE and NqrF. The cofactor is [2Fe-2S] cluster. FAD serves as cofactor.

Its subcellular location is the cell inner membrane. It catalyses the reaction a ubiquinone + n Na(+)(in) + NADH + H(+) = a ubiquinol + n Na(+)(out) + NAD(+). In terms of biological role, NQR complex catalyzes the reduction of ubiquinone-1 to ubiquinol by two successive reactions, coupled with the transport of Na(+) ions from the cytoplasm to the periplasm. The first step is catalyzed by NqrF, which accepts electrons from NADH and reduces ubiquinone-1 to ubisemiquinone by a one-electron transfer pathway. The chain is Na(+)-translocating NADH-quinone reductase subunit F from Haemophilus influenzae (strain PittEE).